The chain runs to 171 residues: Small ribosomal subunit protein uS5 (171 aa).

Residues 15 to 78 form the S5 DRBM domain; it reads YEEKVVKIKR…EKAKKQLIRI (64 aa).

This sequence belongs to the universal ribosomal protein uS5 family. As to quaternary structure, part of the 30S ribosomal subunit. Contacts proteins S4 and S8.

With S4 and S12 plays an important role in translational accuracy. Its function is as follows. Located at the back of the 30S subunit body where it stabilizes the conformation of the head with respect to the body. The chain is Small ribosomal subunit protein uS5 from Phytoplasma australiense.